Here is a 92-residue protein sequence, read N- to C-terminus: Acylphosphatase (92 aa).

Residues 5–92 (RVHIIVSGLV…TSCREFRILT (88 aa)) enclose the Acylphosphatase-like domain. Catalysis depends on residues Arg20 and Asn38.

It belongs to the acylphosphatase family.

The catalysed reaction is an acyl phosphate + H2O = a carboxylate + phosphate + H(+). The polypeptide is Acylphosphatase (acyP) (Chlorobaculum tepidum (strain ATCC 49652 / DSM 12025 / NBRC 103806 / TLS) (Chlorobium tepidum)).